Here is a 134-residue protein sequence, read N- to C-terminus: Small ribosomal subunit protein uS12 (134 aa).

Positions 1 to 30 are disordered; it reads MPTINQLVKHGREKVKEKSKSPALQGHPQK. Aspartate 89 is subject to 3-methylthioaspartic acid. The disordered stretch occupies residues 106-134; the sequence is GVENRRQSRSKYGAKRPKAGAAAGAKGKK. The segment covering 112–123 has biased composition (basic residues); sequence QSRSKYGAKRPK. Residues 124–134 show a composition bias toward low complexity; sequence AGAAAGAKGKK.

The protein belongs to the universal ribosomal protein uS12 family. In terms of assembly, part of the 30S ribosomal subunit. Contacts proteins S8 and S17. May interact with IF1 in the 30S initiation complex.

Its function is as follows. With S4 and S5 plays an important role in translational accuracy. In terms of biological role, interacts with and stabilizes bases of the 16S rRNA that are involved in tRNA selection in the A site and with the mRNA backbone. Located at the interface of the 30S and 50S subunits, it traverses the body of the 30S subunit contacting proteins on the other side and probably holding the rRNA structure together. The combined cluster of proteins S8, S12 and S17 appears to hold together the shoulder and platform of the 30S subunit. In Fervidobacterium nodosum (strain ATCC 35602 / DSM 5306 / Rt17-B1), this protein is Small ribosomal subunit protein uS12.